A 461-amino-acid polypeptide reads, in one-letter code: L-seryl-tRNA(Sec) selenium transferase (461 aa).

Lysine 294 carries the N6-(pyridoxal phosphate)lysine modification.

It belongs to the SelA family. The cofactor is pyridoxal 5'-phosphate.

The protein resides in the cytoplasm. It carries out the reaction L-seryl-tRNA(Sec) + selenophosphate + H(+) = L-selenocysteinyl-tRNA(Sec) + phosphate. It participates in aminoacyl-tRNA biosynthesis; selenocysteinyl-tRNA(Sec) biosynthesis; selenocysteinyl-tRNA(Sec) from L-seryl-tRNA(Sec) (bacterial route): step 1/1. Functionally, converts seryl-tRNA(Sec) to selenocysteinyl-tRNA(Sec) required for selenoprotein biosynthesis. The chain is L-seryl-tRNA(Sec) selenium transferase from Actinobacillus pleuropneumoniae serotype 7 (strain AP76).